The chain runs to 349 residues: B3 domain-containing protein At5g24050 (349 aa).

The TF-B3 DNA-binding region spans 240 to 341 (FNNLLRNDFL…ILCFAMEQSS (102 aa)).

The protein localises to the nucleus. The protein is B3 domain-containing protein At5g24050 of Arabidopsis thaliana (Mouse-ear cress).